The chain runs to 72 residues: DNA-directed RNA polymerase subunit epsilon (72 aa).

Belongs to the RNA polymerase subunit epsilon family. As to quaternary structure, RNAP is composed of a core of 2 alpha, a beta and a beta' subunit. The core is associated with a delta subunit, and at least one of epsilon or omega. When a sigma factor is associated with the core the holoenzyme is formed, which can initiate transcription.

The catalysed reaction is RNA(n) + a ribonucleoside 5'-triphosphate = RNA(n+1) + diphosphate. Its function is as follows. A non-essential component of RNA polymerase (RNAP). The polypeptide is DNA-directed RNA polymerase subunit epsilon (Lactiplantibacillus plantarum (strain ATCC BAA-793 / NCIMB 8826 / WCFS1) (Lactobacillus plantarum)).